We begin with the raw amino-acid sequence, 291 residues long: MPNNYVFSLQPTFTQGLILGQLSILVLLGMILKFLFLDSTQHPFESSSVDTDLLRRKRGLEPRHLPEELLHDNAESAEWFNVLLRQIVDVYRSKLRDGLPGIEGDEIARRRIENYANKIRPSGFLDHIEIHSVDLGVSAPELFNARVRQNAPSPAETEFDATYTDTLSLSLSTSYLFNYPMQSFARLPISLTISLSQFKSSICIIPPEITSPTPVLTISISPNFVLDLSTTSLMGSRAKLANVPKLHELIQHQVRRILAARATWKVVLPGLASVVDVKEEIKKEMSDADLS.

Over 1-16 the chain is Lumenal; the sequence is MPNNYVFSLQPTFTQG. A helical transmembrane segment spans residues 17–37; it reads LILGQLSILVLLGMILKFLFL. The Cytoplasmic segment spans residues 38-291; sequence DSTQHPFESS…KKEMSDADLS (254 aa). In terms of domain architecture, SMP-LTD spans 73–277; it reads NAESAEWFNV…LPGLASVVDV (205 aa).

It belongs to the MMM1 family. In terms of assembly, homodimer. Component of the ER-mitochondria encounter structure (ERMES) or MDM complex, composed of MMM1, MDM10, MDM12 and MDM34. An MMM1 homodimer associates with one molecule of MDM12 on each side in a pairwise head-to-tail manner, and the SMP-LTD domains of MMM1 and MDM12 generate a continuous hydrophobic tunnel for phospholipid trafficking.

The protein resides in the endoplasmic reticulum membrane. Functionally, component of the ERMES/MDM complex, which serves as a molecular tether to connect the endoplasmic reticulum (ER) and mitochondria. Components of this complex are involved in the control of mitochondrial shape and protein biogenesis, and function in nonvesicular lipid trafficking between the ER and mitochondria. The MDM12-MMM1 subcomplex functions in the major beta-barrel assembly pathway that is responsible for biogenesis of all outer membrane beta-barrel proteins, and acts in a late step after the SAM complex. The MDM10-MDM12-MMM1 subcomplex further acts in the TOM40-specific pathway after the action of the MDM12-MMM1 complex. Essential for establishing and maintaining the structure of mitochondria and maintenance of mtDNA nucleoids. This Laccaria bicolor (strain S238N-H82 / ATCC MYA-4686) (Bicoloured deceiver) protein is Maintenance of mitochondrial morphology protein 1.